Reading from the N-terminus, the 945-residue chain is Nonsense-mediated mRNA decay factor SMG8 (945 aa).

Disordered stretches follow at residues 563–604 and 633–671; these read RAEP…SANE and AEAE…ERSA.

It belongs to the SMG8 family.

Involved in nonsense-mediated decay (NMD) of mRNAs containing premature stop codons. Probable component of kinase complex containing nonC and recruited to stalled ribosomes. In Drosophila grimshawi (Hawaiian fruit fly), this protein is Nonsense-mediated mRNA decay factor SMG8.